Consider the following 457-residue polypeptide: Argininosuccinate lyase (457 aa).

This sequence belongs to the lyase 1 family. Argininosuccinate lyase subfamily.

The protein localises to the cytoplasm. The enzyme catalyses 2-(N(omega)-L-arginino)succinate = fumarate + L-arginine. It functions in the pathway amino-acid biosynthesis; L-arginine biosynthesis; L-arginine from L-ornithine and carbamoyl phosphate: step 3/3. This is Argininosuccinate lyase from Escherichia coli O157:H7 (strain EC4115 / EHEC).